An 804-amino-acid chain; its full sequence is Phenylalanine--tRNA ligase beta subunit (804 aa).

The tRNA-binding domain occupies 38-148 (RSYLKGFVIA…EDVPIGASFA (111 aa)). The region spanning 401–476 (PEIRQITFPL…RIYGLDKIKP (76 aa)) is the B5 domain. Positions 454, 460, 463, and 464 each coordinate Mg(2+). The FDX-ACB domain occupies 710–803 (SSLQMVRRDF…VTRMTGASLR (94 aa)).

This sequence belongs to the phenylalanyl-tRNA synthetase beta subunit family. Type 1 subfamily. Tetramer of two alpha and two beta subunits. Mg(2+) is required as a cofactor.

It is found in the cytoplasm. It carries out the reaction tRNA(Phe) + L-phenylalanine + ATP = L-phenylalanyl-tRNA(Phe) + AMP + diphosphate + H(+). In Bartonella henselae (strain ATCC 49882 / DSM 28221 / CCUG 30454 / Houston 1) (Rochalimaea henselae), this protein is Phenylalanine--tRNA ligase beta subunit.